A 70-amino-acid polypeptide reads, in one-letter code: Plasticin-S1 (70 aa).

Residues 1 to 22 (MAFLKKSLFLVLFLALVPLSIC) form the signal peptide. A propeptide spanning residues 23-45 (EEEKREGENEKEQEDDNQSEEKR) is cleaved from the precursor. The segment at 25 to 45 (EKREGENEKEQEDDNQSEEKR) is disordered.

Belongs to the frog skin active peptide (FSAP) family. Plasticin subfamily. Expressed by the skin glands.

It localises to the secreted. The native peptide is a cationic amphipathic alpha-helical antimicrobial peptide with potent activity against both Gram-positive and Gram-negative bacteria. It has weak activity against fungi and shows low hemolytic activity. This chain is Plasticin-S1, found in Phyllomedusa sauvagei (Sauvage's leaf frog).